The primary structure comprises 249 residues: 3-deoxy-D-manno-octulosonic acid kinase (249 aa).

The active site involves Asp-175.

This sequence belongs to the protein kinase superfamily. KdkA/RfaP family.

The protein resides in the cell inner membrane. The catalysed reaction is an alpha-Kdo-(2-&gt;6)-lipid IVA + ATP = a 4-O-phospho-alpha-Kdo-(2-&gt;6)-lipid IVA + ADP + H(+). It participates in bacterial outer membrane biogenesis; LPS core biosynthesis. In terms of biological role, catalyzes the ATP-dependent phosphorylation of the 3-deoxy-D-manno-octulosonic acid (Kdo) residue in Kdo-lipid IV(A) at the 4-OH position. This chain is 3-deoxy-D-manno-octulosonic acid kinase, found in Xanthomonas euvesicatoria pv. vesicatoria (strain 85-10) (Xanthomonas campestris pv. vesicatoria).